We begin with the raw amino-acid sequence, 499 residues long: Glycerol kinase (499 aa).

Thr-12 contributes to the ADP binding site. ATP is bound by residues Thr-12, Thr-13, and Ser-14. Sn-glycerol 3-phosphate is bound at residue Thr-12. Arg-16 serves as a coordination point for ADP. Sn-glycerol 3-phosphate is bound by residues Arg-82, Glu-83, and Tyr-134. The glycerol site is built by Arg-82, Glu-83, and Tyr-134. Phosphohistidine; by HPr is present on His-230. Asp-244 is a sn-glycerol 3-phosphate binding site. Residues Asp-244 and Gln-245 each coordinate glycerol. ADP contacts are provided by Thr-266 and Gly-309. 4 residues coordinate ATP: Thr-266, Gly-309, Gln-313, and Gly-410. Gly-410 and Asn-414 together coordinate ADP.

This sequence belongs to the FGGY kinase family. As to quaternary structure, homotetramer and homodimer (in equilibrium). The phosphoenolpyruvate-dependent sugar phosphotransferase system (PTS), including enzyme I, and histidine-containing protein (HPr) are required for the phosphorylation, which leads to the activation of the enzyme.

It carries out the reaction glycerol + ATP = sn-glycerol 3-phosphate + ADP + H(+). The protein operates within polyol metabolism; glycerol degradation via glycerol kinase pathway; sn-glycerol 3-phosphate from glycerol: step 1/1. With respect to regulation, activated by phosphorylation and inhibited by fructose 1,6-bisphosphate (FBP). Its function is as follows. Key enzyme in the regulation of glycerol uptake and metabolism. Catalyzes the phosphorylation of glycerol to yield sn-glycerol 3-phosphate. The sequence is that of Glycerol kinase from Staphylococcus epidermidis (strain ATCC 12228 / FDA PCI 1200).